A 157-amino-acid polypeptide reads, in one-letter code: MIILGIDPALGSLGWAVVAKETAQLKYLASGIIRTNSKDAMHHRLAFINSTLEKVILEYQPNMAAIEETFVNTNSVTSLKLGYARGAIMSLIGRYNLDMREFKPNTVKKTVTGYGHAEKDQMLHMIKLLLSGTALITNSDEADAVAIAYTCLVTKNY.

Active-site residues include aspartate 7, glutamate 67, and aspartate 140. Mg(2+) contacts are provided by aspartate 7, glutamate 67, and aspartate 140.

Belongs to the RuvC family. In terms of assembly, homodimer which binds Holliday junction (HJ) DNA. The HJ becomes 2-fold symmetrical on binding to RuvC with unstacked arms; it has a different conformation from HJ DNA in complex with RuvA. In the full resolvosome a probable DNA-RuvA(4)-RuvB(12)-RuvC(2) complex forms which resolves the HJ. It depends on Mg(2+) as a cofactor.

The protein localises to the cytoplasm. The enzyme catalyses Endonucleolytic cleavage at a junction such as a reciprocal single-stranded crossover between two homologous DNA duplexes (Holliday junction).. Its function is as follows. The RuvA-RuvB-RuvC complex processes Holliday junction (HJ) DNA during genetic recombination and DNA repair. Endonuclease that resolves HJ intermediates. Cleaves cruciform DNA by making single-stranded nicks across the HJ at symmetrical positions within the homologous arms, yielding a 5'-phosphate and a 3'-hydroxyl group; requires a central core of homology in the junction. The consensus cleavage sequence is 5'-(A/T)TT(C/G)-3'. Cleavage occurs on the 3'-side of the TT dinucleotide at the point of strand exchange. HJ branch migration catalyzed by RuvA-RuvB allows RuvC to scan DNA until it finds its consensus sequence, where it cleaves and resolves the cruciform DNA. The protein is Crossover junction endodeoxyribonuclease RuvC of Rickettsia rickettsii (strain Iowa).